Reading from the N-terminus, the 132-residue chain is RuBisCO chaperone RbcX (132 aa).

The interval 110–132 (HLSLSNPSPESEQQTISDTDWDH) is disordered. Residues 111–132 (LSLSNPSPESEQQTISDTDWDH) show a composition bias toward polar residues.

Belongs to the RbcX family. Homodimer. Interacts with the exposed C-terminal peptide of RbcL via its central cleft, contacts a second RbcL monomer via its peripheral polar surface. RbcX and Raf1 can bind simultaneously to RbcL.

It localises to the carboxysome. It is found in the cytoplasm. In terms of biological role, an RbcL-specific chaperone. The central cleft of the RbcX homodimer (RbcX2) binds the C-terminus of an RbcL monomer, stabilizing the C-terminus and probably preventing its reassociation with chaperonin GroEL-ES. At the same time the peripheral region of RbcX2 binds a second RbcL monomer, bridging the RbcL homodimers in the correct orientation. The RbcX2(2)-bound RbcL dimers then assemble into the RbcL8 core (RbcL8-(RbcX2)8). RbcS binding triggers the release of RbcX2. Its function is as follows. When rbcL-rbcX-rbcS or rbcL-rbcS were overexpressed in E.coli no change in reconstituted RuBisCO activity was observed, which suggests RbcX plays no role in RuBisCO assembly in this system. However in PubMed:8472962 E.coli chaperones groL and groS were also overexpressed, which may compensate for lack of rbcX. The polypeptide is RuBisCO chaperone RbcX (Nostoc sp. (strain PCC 7120 / SAG 25.82 / UTEX 2576)).